A 117-amino-acid polypeptide reads, in one-letter code: UPF0344 protein GWCH70_0687 (117 aa).

4 helical membrane-spanning segments follow: residues 2-22 (THAH…AVSL), 32-52 (IVQM…GLLL), 55-75 (IASI…LIGA), and 97-117 (IVAF…FDLF).

This sequence belongs to the UPF0344 family.

Its subcellular location is the cell membrane. The polypeptide is UPF0344 protein GWCH70_0687 (Geobacillus sp. (strain WCH70)).